The primary structure comprises 296 residues: Phosphoribosylaminoimidazole-succinocarboxamide synthase (296 aa).

It belongs to the SAICAR synthetase family.

It carries out the reaction 5-amino-1-(5-phospho-D-ribosyl)imidazole-4-carboxylate + L-aspartate + ATP = (2S)-2-[5-amino-1-(5-phospho-beta-D-ribosyl)imidazole-4-carboxamido]succinate + ADP + phosphate + 2 H(+). It participates in purine metabolism; IMP biosynthesis via de novo pathway; 5-amino-1-(5-phospho-D-ribosyl)imidazole-4-carboxamide from 5-amino-1-(5-phospho-D-ribosyl)imidazole-4-carboxylate: step 1/2. In Lachnospira eligens (strain ATCC 27750 / DSM 3376 / VPI C15-48 / C15-B4) (Eubacterium eligens), this protein is Phosphoribosylaminoimidazole-succinocarboxamide synthase.